Consider the following 87-residue polypeptide: MTILSAITSISRPNKISKSVISSNGGASLSMGSNSVSCFNACGGGSSYSYSSSYSGSGLDYSYKANYSSSTGYNSSVVIASSTCHCS.

Belongs to the hssA/B family.

This is HssA/B-like protein 56 (hssl56) from Dictyostelium discoideum (Social amoeba).